We begin with the raw amino-acid sequence, 239 residues long: Ribonuclease 3 (239 aa).

The RNase III domain maps to R12 to G137. Position 50 (E50) interacts with Mg(2+). The active site involves D54. Mg(2+) contacts are provided by D123 and E126. The active site involves E126. The DRBM domain maps to D162–I231.

It belongs to the ribonuclease III family. As to quaternary structure, homodimer. Mg(2+) serves as cofactor.

It is found in the cytoplasm. It catalyses the reaction Endonucleolytic cleavage to 5'-phosphomonoester.. Digests double-stranded RNA. Involved in the processing of primary rRNA transcript to yield the immediate precursors to the large and small rRNAs (23S and 16S). Processes some mRNAs, and tRNAs when they are encoded in the rRNA operon. Processes pre-crRNA and tracrRNA of type II CRISPR loci if present in the organism. In Rhizobium johnstonii (strain DSM 114642 / LMG 32736 / 3841) (Rhizobium leguminosarum bv. viciae), this protein is Ribonuclease 3.